We begin with the raw amino-acid sequence, 106 residues long: Large ribosomal subunit protein P1 (106 aa).

A disordered region spans residues 69 to 106; it reads AAAAAPAEEAKEEAKEEEEEEEEVKEEEAIEGLGALFG. Residues 83–98 show a composition bias toward acidic residues; the sequence is KEEEEEEEEVKEEEAI.

Belongs to the eukaryotic ribosomal protein P1/P2 family. Part of the 50S ribosomal subunit. Homodimer, it forms part of the ribosomal stalk which helps the ribosome interact with GTP-bound translation factors. Forms a heptameric uL10/P0(P1)2(P1)2(P1)2 complex, where uL10/P0 forms an elongated spine to which the P1 dimers bind in a sequential fashion.

In terms of biological role, forms part of the ribosomal stalk, playing a central role in the interaction of the ribosome with GTP-bound translation factors. This is Large ribosomal subunit protein P1 from Archaeoglobus fulgidus (strain ATCC 49558 / DSM 4304 / JCM 9628 / NBRC 100126 / VC-16).